The following is a 354-amino-acid chain: S-adenosylmethionine:tRNA ribosyltransferase-isomerase (354 aa).

It belongs to the QueA family. In terms of assembly, monomer.

The protein localises to the cytoplasm. The catalysed reaction is 7-aminomethyl-7-carbaguanosine(34) in tRNA + S-adenosyl-L-methionine = epoxyqueuosine(34) in tRNA + adenine + L-methionine + 2 H(+). It functions in the pathway tRNA modification; tRNA-queuosine biosynthesis. In terms of biological role, transfers and isomerizes the ribose moiety from AdoMet to the 7-aminomethyl group of 7-deazaguanine (preQ1-tRNA) to give epoxyqueuosine (oQ-tRNA). This is S-adenosylmethionine:tRNA ribosyltransferase-isomerase from Salmonella gallinarum (strain 287/91 / NCTC 13346).